A 397-amino-acid polypeptide reads, in one-letter code: Arginine biosynthesis bifunctional protein ArgJ (397 aa).

Residues Thr-147, Lys-173, Thr-184, Glu-270, Asn-392, and Thr-397 each coordinate substrate. Thr-184 acts as the Nucleophile in catalysis.

This sequence belongs to the ArgJ family. Heterotetramer of two alpha and two beta chains.

The protein resides in the cytoplasm. The catalysed reaction is N(2)-acetyl-L-ornithine + L-glutamate = N-acetyl-L-glutamate + L-ornithine. It catalyses the reaction L-glutamate + acetyl-CoA = N-acetyl-L-glutamate + CoA + H(+). The protein operates within amino-acid biosynthesis; L-arginine biosynthesis; L-ornithine and N-acetyl-L-glutamate from L-glutamate and N(2)-acetyl-L-ornithine (cyclic): step 1/1. It functions in the pathway amino-acid biosynthesis; L-arginine biosynthesis; N(2)-acetyl-L-ornithine from L-glutamate: step 1/4. In terms of biological role, catalyzes two activities which are involved in the cyclic version of arginine biosynthesis: the synthesis of N-acetylglutamate from glutamate and acetyl-CoA as the acetyl donor, and of ornithine by transacetylation between N(2)-acetylornithine and glutamate. The protein is Arginine biosynthesis bifunctional protein ArgJ of Staphylococcus epidermidis (strain ATCC 35984 / DSM 28319 / BCRC 17069 / CCUG 31568 / BM 3577 / RP62A).